The sequence spans 487 residues: Proline--tRNA ligase (487 aa).

It belongs to the class-II aminoacyl-tRNA synthetase family. ProS type 3 subfamily. Homodimer.

It is found in the cytoplasm. It carries out the reaction tRNA(Pro) + L-proline + ATP = L-prolyl-tRNA(Pro) + AMP + diphosphate. Its function is as follows. Catalyzes the attachment of proline to tRNA(Pro) in a two-step reaction: proline is first activated by ATP to form Pro-AMP and then transferred to the acceptor end of tRNA(Pro). This chain is Proline--tRNA ligase, found in Pyrobaculum calidifontis (strain DSM 21063 / JCM 11548 / VA1).